The primary structure comprises 163 residues: Lipoprotein signal peptidase (163 aa).

Helical transmembrane passes span 9 to 29 (AWPW…SKYL), 42 to 62 (ILPF…SFLG), 67 to 87 (WQII…ILWL), and 93 to 113 (SEIM…GNFI). Catalysis depends on residues Asp123 and Asp141. Residues 137 to 157 (FNVADSAICVGVFLLIVHMLL) form a helical membrane-spanning segment.

It belongs to the peptidase A8 family.

It localises to the cell inner membrane. The catalysed reaction is Release of signal peptides from bacterial membrane prolipoproteins. Hydrolyzes -Xaa-Yaa-Zaa-|-(S,diacylglyceryl)Cys-, in which Xaa is hydrophobic (preferably Leu), and Yaa (Ala or Ser) and Zaa (Gly or Ala) have small, neutral side chains.. The protein operates within protein modification; lipoprotein biosynthesis (signal peptide cleavage). Its function is as follows. This protein specifically catalyzes the removal of signal peptides from prolipoproteins. The polypeptide is Lipoprotein signal peptidase (Coxiella burnetii (strain RSA 331 / Henzerling II)).